The primary structure comprises 147 residues: Thyrotropin subunit beta (147 aa).

The signal sequence occupies residues 1 to 20 (MRVVLLASGVLCLLAGQVLS). 6 disulfides stabilise this stretch: Cys-22–Cys-72, Cys-36–Cys-87, Cys-39–Cys-126, Cys-47–Cys-103, Cys-51–Cys-105, and Cys-108–Cys-115. Asn-43 carries an N-linked (GlcNAc...) asparagine glycan.

The protein belongs to the glycoprotein hormones subunit beta family. As to quaternary structure, heterodimer of a common alpha chain and a unique beta chain which confers biological specificity to thyrotropin, lutropin, follitropin and gonadotropin.

Its subcellular location is the secreted. Indispensable for the control of thyroid structure and metabolism. May play some role in the biological processes of the immature fishes. This is Thyrotropin subunit beta (tshb) from Anguilla japonica (Japanese eel).